Consider the following 1199-residue polypeptide: Chromosome partition protein Smc (1199 aa).

Residue 32–39 (PNGSGKSN) coordinates ATP. Positions 192–528 (GVAEFDEKSE…NARIKTLKDM (337 aa)) form a coiled coil. Positions 546 to 658 (PGVVDIAGNL…VDNLENAKKL (113 aa)) constitute an SMC hinge domain. A coiled-coil region spans residues 691–1051 (IKVDIDMKKL…YLQLISEVQK (361 aa)).

The protein belongs to the SMC family. In terms of assembly, homodimer.

The protein resides in the cytoplasm. Its function is as follows. Required for chromosome condensation and partitioning. This is Chromosome partition protein Smc from Methanococcus voltae.